We begin with the raw amino-acid sequence, 546 residues long: Probable sucrose-6-phosphate hydrolase (546 aa).

Substrate is bound by residues 105-108 (LLND), Gln124, 167-168 (FS), 228-229 (RD), and Glu283. Asp108 is an active-site residue.

The protein belongs to the glycosyl hydrolase 32 family.

The protein resides in the cytoplasm. It catalyses the reaction Hydrolysis of terminal non-reducing beta-D-fructofuranoside residues in beta-D-fructofuranosides.. It functions in the pathway glycan biosynthesis; sucrose metabolism. In terms of biological role, enables the bacterium to metabolize sucrose as a sole carbon source. The chain is Probable sucrose-6-phosphate hydrolase from Vibrio cholerae.